We begin with the raw amino-acid sequence, 570 residues long: Spastin (570 aa).

The Cytoplasmic portion of the chain corresponds to 1–35; sequence MNSGHKARLRGGRACGPVSDGSARGNRLLFYTRSL. An intramembrane region (helical) is located at residues 36–52; sequence SRVPEWLLRVLLLLLRW. Residues 53-570 lie on the Cytoplasmic side of the membrane; sequence LFQPIRRAMA…NREYGDTTGV (518 aa). Residues 83–158 form the MIT domain; it reads YHKQAFEFIS…SMAEDRLKLL (76 aa). A disordered region spans residues 186-269; the sequence is APASGAVSKK…SPQRKRDMKN (84 aa). Polar residues-rich tracts occupy residues 199–208, 216–242, and 251–261; these read LTITNQTSLR, TPNA…NQKG, and VKASTTATASP. An ATP-binding site is contributed by 335-342; that stretch reads GPPGNGKT.

It belongs to the AAA ATPase family. Spastin subfamily. In terms of assembly, homohexamer. The homohexamer is stabilized by ATP-binding. The homohexamer may adopt a ring conformation through which microtubules pass prior to being severed. Interacts with microtubules.

The protein resides in the membrane. It localises to the cytoplasm. Its subcellular location is the cytoskeleton. It is found in the microtubule organizing center. The protein localises to the centrosome. The protein resides in the perinuclear region. It localises to the nucleus. It carries out the reaction n ATP + n H2O + a microtubule = n ADP + n phosphate + (n+1) alpha/beta tubulin heterodimers.. Its function is as follows. ATP-dependent microtubule severing protein that specifically recognizes and cuts microtubules that are polyglutamylated. Preferentially recognizes and acts on microtubules decorated with short polyglutamate tails: severing activity increases as the number of glutamates per tubulin rises from one to eight, but decreases beyond this glutamylation threshold. Microtubule severing promotes reorganization of cellular microtubule arrays and the release of microtubules from the centrosome following nucleation. Required for membrane traffic from the endoplasmic reticulum (ER) to the Golgi and for completion of the abscission stage of cytokinesis. Also plays a role in axon growth and the formation of axonal branches. The polypeptide is Spastin (Danio rerio (Zebrafish)).